The following is a 437-amino-acid chain: Nicotinate phosphoribosyltransferase (437 aa).

At His231 the chain carries Phosphohistidine; by autocatalysis.

This sequence belongs to the NAPRTase family. In terms of processing, transiently phosphorylated on a His residue during the reaction cycle. Phosphorylation strongly increases the affinity for substrates and increases the rate of nicotinate D-ribonucleotide production. Dephosphorylation regenerates the low-affinity form of the enzyme, leading to product release.

The enzyme catalyses nicotinate + 5-phospho-alpha-D-ribose 1-diphosphate + ATP + H2O = nicotinate beta-D-ribonucleotide + ADP + phosphate + diphosphate. It participates in cofactor biosynthesis; NAD(+) biosynthesis; nicotinate D-ribonucleotide from nicotinate: step 1/1. In terms of biological role, catalyzes the synthesis of beta-nicotinate D-ribonucleotide from nicotinate and 5-phospho-D-ribose 1-phosphate at the expense of ATP. The protein is Nicotinate phosphoribosyltransferase of Vibrio vulnificus (strain YJ016).